The following is a 334-amino-acid chain: Ketol-acid reductoisomerase (NADP(+)) (334 aa).

The region spanning 1–181 is the KARI N-terminal Rossmann domain; the sequence is MNIYYDKNAD…GGGRTGILET (181 aa). Residues 24-27, Arg47, Ser50, Ser52, and 82-85 contribute to the NADP(+) site; these read YGSQ and DEFQ. His107 is a catalytic residue. Position 133 (Gly133) interacts with NADP(+). The KARI C-terminal knotted domain maps to 182–323; it reads SFKDETETDL…ESLRSMMPWI (142 aa). The Mg(2+) site is built by Asp190, Glu194, Glu226, and Glu230. A substrate-binding site is contributed by Ser251.

This sequence belongs to the ketol-acid reductoisomerase family. Mg(2+) is required as a cofactor.

The catalysed reaction is (2R)-2,3-dihydroxy-3-methylbutanoate + NADP(+) = (2S)-2-acetolactate + NADPH + H(+). It catalyses the reaction (2R,3R)-2,3-dihydroxy-3-methylpentanoate + NADP(+) = (S)-2-ethyl-2-hydroxy-3-oxobutanoate + NADPH + H(+). Its pathway is amino-acid biosynthesis; L-isoleucine biosynthesis; L-isoleucine from 2-oxobutanoate: step 2/4. It participates in amino-acid biosynthesis; L-valine biosynthesis; L-valine from pyruvate: step 2/4. Involved in the biosynthesis of branched-chain amino acids (BCAA). Catalyzes an alkyl-migration followed by a ketol-acid reduction of (S)-2-acetolactate (S2AL) to yield (R)-2,3-dihydroxy-isovalerate. In the isomerase reaction, S2AL is rearranged via a Mg-dependent methyl migration to produce 3-hydroxy-3-methyl-2-ketobutyrate (HMKB). In the reductase reaction, this 2-ketoacid undergoes a metal-dependent reduction by NADPH to yield (R)-2,3-dihydroxy-isovalerate. This chain is Ketol-acid reductoisomerase (NADP(+)), found in Vesicomyosocius okutanii subsp. Calyptogena okutanii (strain HA).